A 728-amino-acid chain; its full sequence is 1,4-alpha-glucan branching enzyme GlgB (728 aa).

The active-site Nucleophile is aspartate 405. The Proton donor role is filled by glutamate 458.

Belongs to the glycosyl hydrolase 13 family. GlgB subfamily. Monomer.

It catalyses the reaction Transfers a segment of a (1-&gt;4)-alpha-D-glucan chain to a primary hydroxy group in a similar glucan chain.. Its pathway is glycan biosynthesis; glycogen biosynthesis. Catalyzes the formation of the alpha-1,6-glucosidic linkages in glycogen by scission of a 1,4-alpha-linked oligosaccharide from growing alpha-1,4-glucan chains and the subsequent attachment of the oligosaccharide to the alpha-1,6 position. The polypeptide is 1,4-alpha-glucan branching enzyme GlgB (Citrobacter koseri (strain ATCC BAA-895 / CDC 4225-83 / SGSC4696)).